The following is a 66-amino-acid chain: Regulator of G-protein signaling 11 (66 aa).

Residues 1–66 enclose the RGS domain; sequence EACEELRFGG…DAAQLHIYML (66 aa).

In terms of assembly, heterodimer with Gbeta5. Interacts with RGS7BP, leading to regulate the subcellular location of the heterodimer formed with Gbeta5.

Functionally, inhibits signal transduction by increasing the GTPase activity of G protein alpha subunits thereby driving them into their inactive GDP-bound form. This chain is Regulator of G-protein signaling 11 (Rgs11), found in Rattus norvegicus (Rat).